A 459-amino-acid chain; its full sequence is ATP synthase subunit beta (459 aa).

149–156 contributes to the ATP binding site; sequence GGAGVGKT.

Belongs to the ATPase alpha/beta chains family. As to quaternary structure, F-type ATPases have 2 components, CF(1) - the catalytic core - and CF(0) - the membrane proton channel. CF(1) has five subunits: alpha(3), beta(3), gamma(1), delta(1), epsilon(1). CF(0) has three main subunits: a(1), b(2) and c(9-12). The alpha and beta chains form an alternating ring which encloses part of the gamma chain. CF(1) is attached to CF(0) by a central stalk formed by the gamma and epsilon chains, while a peripheral stalk is formed by the delta and b chains.

The protein localises to the cell inner membrane. The catalysed reaction is ATP + H2O + 4 H(+)(in) = ADP + phosphate + 5 H(+)(out). Functionally, produces ATP from ADP in the presence of a proton gradient across the membrane. The catalytic sites are hosted primarily by the beta subunits. The sequence is that of ATP synthase subunit beta from Pseudomonas syringae pv. syringae (strain B728a).